A 2715-amino-acid chain; its full sequence is Teneurin-3 (2715 aa).

Disordered regions lie at residues 1–38 (MDVKERRPYCSLTKSRREKERRYTNSSADNEECRVPTQ) and 142–223 (GRSS…AALP). The 309-residue stretch at 1 to 309 (MDVKERRPYC…KSSKYCSWRC (309 aa)) folds into the Teneurin N-terminal domain. At 1–310 (MDVKERRPYC…SSKYCSWRCT (310 aa)) the chain is on the cytoplasmic side. The segment covering 142-153 (GRSSCLSSRSNS) has biased composition (low complexity). The span at 159–168 (DTEHENRSDS) shows a compositional bias: basic and acidic residues. Positions 171-182 (EQPSNNPGQPTL) are enriched in polar residues. A compositionally biased stretch (low complexity) spans 201 to 213 (TSLNRNSLTNRRN). Residues 311–331 (ALCAVGVSVLLAILLSYFIAM) traverse the membrane as a helical segment. At 332-2715 (HLFGLNWHLQ…FLRQSEIGKR (2384 aa)) the chain is on the extracellular side. Residues N345, N380, and N419 are each glycosylated (N-linked (GlcNAc...) asparagine). 8 EGF-like domains span residues 514 to 545 (SVVECPRNCHGNGECVSGTCHCFPGFLGPDCS), 546 to 576 (RAACPVLCSGNGQYSKGRCLCFSGWKGTECD), 578 to 610 (PTTQCIDPQCGGRGICIMGSCACNSGYKGENCE), 611 to 642 (EADCLDPGCSNHGVCIHGECHCNPGWGGSNCE), 644 to 677 (LKTMCADQCSGHGTYLQESGSCTCDPNWTGPDCS), 678 to 709 (NEICSVDCGSHGVCMGGSCRCEEGWTGPACNQ), 710 to 739 (RACHPRCAEHGTCKDGKCECSQGWNGEHCT), and 740 to 783 (IAHY…AGCD). Cystine bridges form between C518/C528, C522/C533, C535/C544, C553/C564, C566/C575, C582/C593, C587/C598, C600/C609, C614/C625, C619/C630, C632/C641, C652/C665, C667/C676, C681/C691, C685/C696, C698/C707, C712/C722, C716/C727, C729/C738, C752/C762, C756/C771, and C773/C782. An N-linked (GlcNAc...) asparagine glycan is attached at N670. 2 N-linked (GlcNAc...) asparagine glycosylation sites follow: N869 and N892. The NHL 1 repeat unit spans residues 1181–1209 (LLAPVALACGIDGSLYVGDFNYVRRIFPS). An N-linked (GlcNAc...) asparagine glycan is attached at N1211. NHL repeat units follow at residues 1216 to 1260 (LELR…PKSL), 1286 to 1330 (ARCG…NGII), 1347 to 1387 (CDTS…ITEN), 1418 to 1445 (LESATAIAVSYSGVLYITETDEKKINRI), and 1474 to 1517 (CYQS…VSKN). The YD 1 repeat unit spans residues 1527-1546 (YEVASPTDQELYIFDINGTH). N-linked (GlcNAc...) asparagine glycans are attached at residues N1543 and N1560. YD repeat units lie at residues 1563–1583 (YSNDNDVTAVTDSNGNTLRIR), 1626–1645 (YHGNSGLLATKSDETGWTTF), and 1646–1668 (FDYDSEGRLTNVTFPTGVVTNLH). 4 N-linked (GlcNAc...) asparagine glycosylation sites follow: N1656, N1693, N1751, and N1836. 18 YD repeats span residues 1839–1858 (YSSTGQIASIQRGTTSEKVD), 1880–1898 (YLEKSMVLLLHSQRQYIFE), 1899–1919 (YDMWDRLSAITMPSVARHTMQ), 1926–1943 (YYRNIYNPPESNASIITD), 1944–1965 (YNEEGLLLQTAFLGTSRRVLFK), 1966–1983 (YRRQTRLSEILYDSTRVS), 1986–2006 (YDETAGVLKTVNLQSDGFICT), 2009–2029 (YRQIGPLIDRQIFRFSEDGMV), 2037–2056 (YDNSFRVTSMQGVINETPLP), 2062–2079 (FDDISGKVEQFGKFGVIY), 2080–2106 (YDINQIISTAVMTYTKHFDAHGRIKEI), 2108–2121 (YEIFRSLMYWITIQ), 2122–2145 (YDNMGRVTKREIKIGPFANTTKYA), 2148–2168 (YDVDGQLQTVYLNEKIMWRYN), 2169–2189 (YDLNGNLHLLNPSSSARLTPL), 2191–2211 (YDLRDRITRLGDVQYRLDEDG), 2223–2243 (YSSKGLLTRVYSKGSGWTVIY), and 2245–2265 (YDGLGRRVSSKTSLGQHLQFF). N1937 is a glycosylation site (N-linked (GlcNAc...) asparagine). N2140 is a glycosylation site (N-linked (GlcNAc...) asparagine). Residue N2280 is glycosylated (N-linked (GlcNAc...) asparagine). A YD 23 repeat occupies 2291 to 2332 (YDLQGHLFAMEISSGDEFYIASDNTGTPLAVFSSNGLMLKQT). N-linked (GlcNAc...) asparagine glycosylation occurs at N2592.

The protein belongs to the tenascin family. Teneurin subfamily. Homodimer; disulfide-linked; to mediate homophilic cell adhesion. Most isoforms (isoform-type A and type-B) can mediate homophilic interaction. Heterodimer with either TENM1 or TENM2. May also form heterodimer with TENM4. Isoform A0B0: Does not form homodimer to mediate homophilic cell adhesion. Isoform A0B0: Heterodimer with ADGRL3. In brain, expressed in highly specific regions of the postnatal brain: expressed in restricted domains of the developing hippocampal region, including proximal CA1, distal subiculum, and medial entorhinal cortex (at protein level). Expression matches with topographic connectivity between entorhinal cortex, CA1, and subiculum (at protein level). Also specifically expressed in subregions of the presubiculum, parasubiculum, medial mammillary nucleus and anteroventral thalamic nucleus that are topographically connected with subiculum or entorhinal cortex (at protein level). Expressed in neurons of the developing visual pathway (at protein level). Expressed in the dorsal and ventral lateral geniculate nucleus (dLGN and vLGN) and optic tract at birth. Expressed in ipsilateral retinal axons of terminal zones (TZs) in the developing superior colliculus (SC) throughout the first postnatal week. Expressed in the layer V of the visual caudal cortex. Expressed in the femoral and mandibular condylar cartilages. Strongly expressed in fibrous and proliferating chondrocytes. Poorly expressed in mature chondrocytes. Not expressed in hypertrophic chondrocytes.

The protein localises to the cell membrane. It localises to the cell projection. Its subcellular location is the axon. Its function is as follows. Involved in neural development by regulating the establishment of proper connectivity within the nervous system. Acts in both pre- and postsynaptic neurons in the hippocampus to control the assembly of a precise topographic projection: required in both CA1 and subicular neurons for the precise targeting of proximal CA1 axons to distal subiculum, probably by promoting homophilic cell adhesion. Promotes homophilic adhesion in a splicing isoform-dependent manner: most isoforms (isoform-type A and type-B) can mediate homophilic interaction. Promotes axon guidance. Required for proper dendrite morphogenesis and axon targeting in the vertebrate visual system, thereby playing a key role in the development of the visual pathway. Regulates the formation in ipsilateral retinal mapping to both the dorsal lateral geniculate nucleus (dLGN) and the superior colliculus (SC). May also be involved in the differentiation of the fibroblast-like cells in the superficial layer of mandibular condylar cartilage into chondrocytes. This chain is Teneurin-3, found in Mus musculus (Mouse).